We begin with the raw amino-acid sequence, 101 residues long: Integration host factor subunit alpha (101 aa).

It belongs to the bacterial histone-like protein family. As to quaternary structure, heterodimer of an alpha and a beta chain.

This protein is one of the two subunits of integration host factor, a specific DNA-binding protein that functions in genetic recombination as well as in transcriptional and translational control. The protein is Integration host factor subunit alpha of Saccharophagus degradans (strain 2-40 / ATCC 43961 / DSM 17024).